A 193-amino-acid polypeptide reads, in one-letter code: V-type sodium ATPase subunit E (193 aa).

It belongs to the V-ATPase E subunit family. In terms of processing, the N-terminus is blocked.

Involved in ATP-driven sodium extrusion. The protein is V-type sodium ATPase subunit E (ntpE) of Enterococcus hirae (strain ATCC 9790 / DSM 20160 / JCM 8729 / LMG 6399 / NBRC 3181 / NCIMB 6459 / NCDO 1258 / NCTC 12367 / WDCM 00089 / R).